The sequence spans 309 residues: Taste receptor type 2 member 113 (309 aa).

Residues 1 to 10 (MVAVLQSTLP) are Extracellular-facing. The chain crosses the membrane as a helical span at residues 11 to 31 (IIFSMEFIMGTLGNGFIFLIV). Over 32-55 (CIDWVQRRKISLVDQIRTALAISR) the chain is Cytoplasmic. A helical transmembrane segment spans residues 56–76 (IALIWLIFLDWWVSVHYPALH). Residues 77 to 80 (ETGK) lie on the Extracellular side of the membrane. Residues 81 to 101 (MLSTYLISWTVINHCNFWLTA) form a helical membrane-spanning segment. The Cytoplasmic portion of the chain corresponds to 102–127 (NLSILYFLKIANFSNIIFLYLKFRSK). A helical transmembrane segment spans residues 128-148 (NVVLVTLLVSLFFLFLNTVII). Topologically, residues 149 to 185 (KIFSDVCFDSVQRNVSQIFIMYNHEQICKFLSFTNPM) are extracellular. N162 carries N-linked (GlcNAc...) asparagine glycosylation. Residues 186–206 (FTFIPFVMSTVMFSLLIFSLW) traverse the membrane as a helical segment. The Cytoplasmic segment spans residues 207–229 (RHLKNMQHTAKGCRDISTTVHIR). A helical transmembrane segment spans residues 230–250 (ALQTIIVSVVLYTIFFLSFFV). At 251–262 (KVWSFVSPERYL) the chain is on the extracellular side. A helical transmembrane segment spans residues 263–283 (IFLFVWALGNAVFSAHPFVMI). At 284 to 309 (LVNRRLRLASLSLIFWLWYRFKNIEV) the chain is on the cytoplasmic side.

It belongs to the G-protein coupled receptor T2R family.

It localises to the membrane. Putative taste receptor which may play a role in the perception of bitterness. The protein is Taste receptor type 2 member 113 of Mus musculus (Mouse).